A 105-amino-acid chain; its full sequence is uncharacterized protein (105 aa).

This is an uncharacterized protein from Homo sapiens (Human).